Consider the following 313-residue polypeptide: Homoserine O-succinyltransferase (313 aa).

The active-site Acyl-thioester intermediate is Cys-142. Substrate-binding residues include Lys-163 and Ser-192. The active-site Proton acceptor is the His-235. Residue Glu-237 is part of the active site. Residue Arg-249 coordinates substrate.

The protein belongs to the MetA family.

The protein resides in the cytoplasm. It catalyses the reaction L-homoserine + succinyl-CoA = O-succinyl-L-homoserine + CoA. Its pathway is amino-acid biosynthesis; L-methionine biosynthesis via de novo pathway; O-succinyl-L-homoserine from L-homoserine: step 1/1. Functionally, transfers a succinyl group from succinyl-CoA to L-homoserine, forming succinyl-L-homoserine. This is Homoserine O-succinyltransferase from Aliivibrio fischeri (strain MJ11) (Vibrio fischeri).